The primary structure comprises 340 residues: Ketol-acid reductoisomerase (NADP(+)) (340 aa).

In terms of domain architecture, KARI N-terminal Rossmann spans Met1–Thr183. NADP(+) is bound by residues Phe26–Gln29, Arg49, Ser52, Ser54, and Asp84–Gln87. The active site involves His109. Gly135 lines the NADP(+) pocket. A KARI C-terminal knotted domain is found at Thr184–Ile329. Mg(2+) is bound by residues Asp192, Glu196, Glu228, and Glu232. Position 253 (Ser253) interacts with substrate.

Belongs to the ketol-acid reductoisomerase family. It depends on Mg(2+) as a cofactor.

It catalyses the reaction (2R)-2,3-dihydroxy-3-methylbutanoate + NADP(+) = (2S)-2-acetolactate + NADPH + H(+). It carries out the reaction (2R,3R)-2,3-dihydroxy-3-methylpentanoate + NADP(+) = (S)-2-ethyl-2-hydroxy-3-oxobutanoate + NADPH + H(+). The protein operates within amino-acid biosynthesis; L-isoleucine biosynthesis; L-isoleucine from 2-oxobutanoate: step 2/4. It functions in the pathway amino-acid biosynthesis; L-valine biosynthesis; L-valine from pyruvate: step 2/4. Involved in the biosynthesis of branched-chain amino acids (BCAA). Catalyzes an alkyl-migration followed by a ketol-acid reduction of (S)-2-acetolactate (S2AL) to yield (R)-2,3-dihydroxy-isovalerate. In the isomerase reaction, S2AL is rearranged via a Mg-dependent methyl migration to produce 3-hydroxy-3-methyl-2-ketobutyrate (HMKB). In the reductase reaction, this 2-ketoacid undergoes a metal-dependent reduction by NADPH to yield (R)-2,3-dihydroxy-isovalerate. This Campylobacter jejuni subsp. jejuni serotype O:2 (strain ATCC 700819 / NCTC 11168) protein is Ketol-acid reductoisomerase (NADP(+)).